A 150-amino-acid chain; its full sequence is N-alpha-acetyltransferase 30 (150 aa).

The 149-residue stretch at 2-150 folds into the N-acetyltransferase domain; it reads VTIVPYSHQY…DAFRYILYPN (149 aa).

Belongs to the acetyltransferase family. MAK3 subfamily.

The protein localises to the cytoplasm. It localises to the nucleus. The enzyme catalyses N-terminal L-methionyl-L-leucyl-[protein] + acetyl-CoA = N-terminal N(alpha)-acetyl-L-methionyl-L-leucyl-[protein] + CoA + H(+). It catalyses the reaction N-terminal L-methionyl-L-isoleucyl-[protein] + acetyl-CoA = N-terminal N(alpha)-acetyl-L-methionyl-L-isoleucyl-[protein] + CoA + H(+). The catalysed reaction is N-terminal L-methionyl-L-phenylalanyl-[protein] + acetyl-CoA = N-terminal N(alpha)-acetyl-L-methionyl-L-phenylalanyl-[protein] + CoA + H(+). It carries out the reaction N-terminal L-methionyl-L-tryptophyl-[protein] + acetyl-CoA = N-terminal N(alpha)-acetyl-L-methionyl-L-tryptophyl-[protein] + CoA + H(+). The enzyme catalyses N-terminal L-methionyl-L-tyrosyl-[protein] + acetyl-CoA = N-terminal N(alpha)-acetyl-L-methionyl-L-tyrosyl-[protein] + CoA + H(+). Catalytic component of the NatC N-terminal acetyltransferase. The polypeptide is N-alpha-acetyltransferase 30 (naa30) (Schizosaccharomyces pombe (strain 972 / ATCC 24843) (Fission yeast)).